Here is a 665-residue protein sequence, read N- to C-terminus: Intraflagellar transport protein 70B (665 aa).

7 TPR repeats span residues 11–44 (DGEF…SPRS), 45–78 (RAGL…HPEL), 154–187 (TDGQ…SGYQ), 189–221 (DLSY…GIRQ), 393–424 (LTIQ…EKYI), 425–457 (PVLM…CNDH), and 459–492 (VWKL…HYDN). Residues 130–154 (PGSRSLVEQLPSREGGEESGGENET) are disordered. Positions 508–535 (YIMTSQNEEAEELMRKIEKEEEQLSYDD) form a coiled coil. One copy of the TPR 8 repeat lies at 544-577 (CIVNLVIGTLYCAKGNYDFGISRVIKSLEPYNKK).

It belongs to the TTC30/dfy-1/fleer family. Interacts with the IFT B complex components IFT27, IFT46, IFT74, IFT52, IFT57, IFT80, IFT81 and IFT88. Interacts with KIF17.

Its subcellular location is the cell projection. The protein localises to the cilium. In terms of biological role, required for polyglutamylation of axonemal tubulin. Plays a role in anterograde intraflagellar transport (IFT), the process by which cilia precursors are transported from the base of the cilium to the site of their incorporation at the tip. This is Intraflagellar transport protein 70B from Homo sapiens (Human).